The sequence spans 459 residues: ADP-specific phosphofructokinase (459 aa).

An ADPK domain is found at 1–457 (MMEFLKDFQK…FASYLSLLKR (457 aa)). Mg(2+)-binding residues include Glu-268, Glu-298, and Asp-441. Catalysis depends on Asp-441, which acts as the Proton acceptor.

Belongs to the carbohydrate kinase PfkC family. Requires Mg(2+) as cofactor.

It localises to the cytoplasm. The enzyme catalyses beta-D-fructose 6-phosphate + ADP = beta-D-fructose 1,6-bisphosphate + AMP + H(+). It functions in the pathway carbohydrate degradation; glycolysis. Functionally, catalyzes the phosphorylation of fructose 6-phosphate to fructose 1,6-bisphosphate using ADP as the phosphate donor. This Thermococcus litoralis protein is ADP-specific phosphofructokinase.